A 1726-amino-acid chain; its full sequence is Protein NLRC5 (1726 aa).

Residues 207–537 (RVVMLSGQAG…THLTIQEFMA (331 aa)) form the NACHT domain. 213–220 (GQAGSGKT) is a binding site for ATP. LRR repeat units follow at residues 879–902 (LTVLNLSHNALGNRGLKKLLEHLP), 904–925 (LDTIQEINVSDNGVDMDGVVLL), 1002–1025 (NLDFSHGTLKDESTEKLLKFLPNM), 1026–1048 (ASLNLLNLSHIQMSTDSALLLVQ), 1103–1126 (CHHLTDLDLSSNFLKDEDVKTFVQ), 1128–1155 (LPKLQISGSVSLNNNNLTEVGVLYLLSL), 1212–1235 (LNSVQTLELRNNSFSADTIKYLIT), 1351–1374 (AEFLSSVLPSLKNLKILSLSSKGE), 1387–1411 (AQKHLEQLSLAHHVIKDRGAAVLGN), 1421–1443 (SLSLLKCLDWTATGGRDLVRGLV), 1447–1468 (SLEEIRLDSIELDEESIDCFAQ), 1502–1525 (LIELEEIELIGLRMGDRGVEELVK), 1532–1553 (RLRKINLSENRVSDHAGEMLVK), 1560–1580 (ALQQIHLFRNNLGHSSAAVLG), 1588–1609 (ELTELDLSENQMESKGCSSVCE), 1616–1637 (ALKKLHLTSIGTSDLVNVASCL), 1642–1662 (SIEDISLSWNNCENDVVLKLA), and 1670–1691 (KLKRLDLEANNINTSGAMALAT).

Belongs to the NLRP family.

The protein resides in the cytoplasm. Its function is as follows. Probable regulator of the NF-kappa-B and type I interferon signaling pathways. May also regulate the type II interferon signaling pathway. Plays a role in homeostatic control of innate immunity and in antiviral defense mechanisms. The polypeptide is Protein NLRC5 (nlrc5) (Ictalurus punctatus (Channel catfish)).